Consider the following 195-residue polypeptide: MPPMKDSSNSTPRTDEELQEVTVGELKPHNASITLLEYDPRWPKLFDREAKRIRSVLGNKALQVEHVGSTSVPGLCAKPIIDILLVVTDSADETTYVPDLEKVGYTLRIREPDWFEHRVFKGPDTDINLHVFSKGTSEIDRMLRFRDWLRANNSDRDNYARVKRKLAQHEWRQVQHYADAKSSIVQEIMKRANAT.

A compositionally biased stretch (polar residues) spans 1–12; the sequence is MPPMKDSSNSTP. The segment at 1 to 21 is disordered; sequence MPPMKDSSNSTPRTDEELQEV.

The protein belongs to the UPF0157 (GrpB) family.

This chain is UPF0157 protein BH1888, found in Halalkalibacterium halodurans (strain ATCC BAA-125 / DSM 18197 / FERM 7344 / JCM 9153 / C-125) (Bacillus halodurans).